We begin with the raw amino-acid sequence, 1139 residues long: DNA-directed RNA polymerase subunit beta (1139 aa).

The tract at residues 1085–1139 (ADTSNRHTPSRPTYESVTSEDLSPSPAFTRVLRTADANASRSLEEDEDEEEEEDF) is disordered. Positions 1086–1106 (DTSNRHTPSRPTYESVTSEDL) are enriched in polar residues. The segment covering 1128 to 1139 (EEDEDEEEEEDF) has biased composition (acidic residues).

It belongs to the RNA polymerase beta chain family. In cyanobacteria the RNAP catalytic core is composed of 2 alpha, 1 beta, 1 beta', 1 gamma and 1 omega subunit. When a sigma factor is associated with the core the holoenzyme is formed, which can initiate transcription.

The catalysed reaction is RNA(n) + a ribonucleoside 5'-triphosphate = RNA(n+1) + diphosphate. In terms of biological role, DNA-dependent RNA polymerase catalyzes the transcription of DNA into RNA using the four ribonucleoside triphosphates as substrates. This chain is DNA-directed RNA polymerase subunit beta, found in Synechococcus sp. (strain JA-2-3B'a(2-13)) (Cyanobacteria bacterium Yellowstone B-Prime).